The following is an 888-amino-acid chain: Aconitate hydratase A (888 aa).

[4Fe-4S] cluster contacts are provided by Cys433, Cys499, and Cys502.

The protein belongs to the aconitase/IPM isomerase family. As to quaternary structure, monomer. [4Fe-4S] cluster is required as a cofactor.

The enzyme catalyses citrate = D-threo-isocitrate. The catalysed reaction is (2S,3R)-3-hydroxybutane-1,2,3-tricarboxylate = 2-methyl-cis-aconitate + H2O. The protein operates within carbohydrate metabolism; tricarboxylic acid cycle; isocitrate from oxaloacetate: step 2/2. Its pathway is organic acid metabolism; propanoate degradation. In terms of biological role, involved in the catabolism of short chain fatty acids (SCFA) via the tricarboxylic acid (TCA)(acetyl degradation route) and probably the 2-methylcitrate cycle I (propionate degradation route). Catalyzes the reversible isomerization of citrate to isocitrate via cis-aconitate. Could catalyze the hydration of 2-methyl-cis-aconitate to yield (2R,3S)-2-methylisocitrate. The apo form of AcnA functions as a RNA-binding regulatory protein. The sequence is that of Aconitate hydratase A (acn) from Streptococcus mutans serotype c (strain ATCC 700610 / UA159).